The sequence spans 105 residues: Integration host factor subunit beta (105 aa).

This sequence belongs to the bacterial histone-like protein family. As to quaternary structure, heterodimer of an alpha and a beta chain.

This protein is one of the two subunits of integration host factor, a specific DNA-binding protein that functions in genetic recombination as well as in transcriptional and translational control. In Nitrosomonas eutropha (strain DSM 101675 / C91 / Nm57), this protein is Integration host factor subunit beta.